The sequence spans 221 residues: N-(5'-phosphoribosyl)anthranilate isomerase (221 aa).

It belongs to the TrpF family.

It catalyses the reaction N-(5-phospho-beta-D-ribosyl)anthranilate = 1-(2-carboxyphenylamino)-1-deoxy-D-ribulose 5-phosphate. Its pathway is amino-acid biosynthesis; L-tryptophan biosynthesis; L-tryptophan from chorismate: step 3/5. This Parabacteroides distasonis (strain ATCC 8503 / DSM 20701 / CIP 104284 / JCM 5825 / NCTC 11152) protein is N-(5'-phosphoribosyl)anthranilate isomerase.